The following is a 947-amino-acid chain: Bifunctional glutamine synthetase adenylyltransferase/adenylyl-removing enzyme (947 aa).

The interval 1-440 (MTPLSSPLSQ…VFNELIGDDE (440 aa)) is adenylyl removase. Residues 450-947 (SEPWREVWQD…ASWRKWLVAV (498 aa)) are adenylyl transferase.

The protein belongs to the GlnE family. Mg(2+) is required as a cofactor.

The catalysed reaction is [glutamine synthetase]-O(4)-(5'-adenylyl)-L-tyrosine + phosphate = [glutamine synthetase]-L-tyrosine + ADP. It carries out the reaction [glutamine synthetase]-L-tyrosine + ATP = [glutamine synthetase]-O(4)-(5'-adenylyl)-L-tyrosine + diphosphate. Involved in the regulation of glutamine synthetase GlnA, a key enzyme in the process to assimilate ammonia. When cellular nitrogen levels are high, the C-terminal adenylyl transferase (AT) inactivates GlnA by covalent transfer of an adenylyl group from ATP to specific tyrosine residue of GlnA, thus reducing its activity. Conversely, when nitrogen levels are low, the N-terminal adenylyl removase (AR) activates GlnA by removing the adenylyl group by phosphorolysis, increasing its activity. The regulatory region of GlnE binds the signal transduction protein PII (GlnB) which indicates the nitrogen status of the cell. This is Bifunctional glutamine synthetase adenylyltransferase/adenylyl-removing enzyme from Salmonella paratyphi A (strain ATCC 9150 / SARB42).